Consider the following 451-residue polypeptide: Scaffold protein ILK (451 aa).

Position 1 is an N-acetylmethionine (Met1). ANK repeat units lie at residues 2–30 (DDIF…LNQG), 31–63 (DDHG…INVM), 64–96 (NRGD…INAV), 97–129 (NEHG…VSIC), and 130–174 (NKYG…GTTR). Residues 33–139 (HGFSPLHWAC…NKYGEMPMDK (107 aa)) form an interaction with LIMS1 region. Thr173 bears the Phosphothreonine mark. The PH-like; mediates interaction with TGFB1I1 stretch occupies residues 180–212 (GTLNKHSGIDFKQLNFLAKLNENHSGELWKGRW). A Phosphoserine modification is found at Ser186. Positions 193 to 445 (LNFLAKLNEN…PKFDMIVPIL (253 aa)) constitute a Protein kinase domain. 4 residues coordinate ATP: Asn200, Asn202, His203, and Ser204. Position 246 is a phosphoserine (Ser246). The ATP site is built by His270, Met272, and Asn279. Asp339 is a binding site for Mg(2+). Lys341 is an ATP binding site. The Nuclear localization signal signature appears at 363–371 (KKPEDTNRR). Lys425 carries the N6-acetyllysine modification.

This sequence belongs to the protein kinase superfamily. TKL Ser/Thr protein kinase family. In terms of assembly, component of the heterotrimeric IPP (ILK-PINCH-PARVIN) complex composed of ILK, LIMS1/PINCH and PARVA; the complex binds to F-actin via the C-terminal tail of LIMS1 and the N-terminal region of PARVA, promoting F-actin filament bundling. Formation of the IPP complex is dependent on protein kinase C and precedes integrin-mediated cell adhesion and spreading. ILK also interacts with LIMS2/PINCH2 and with PARVB and PARVG which may substitute for LIMS1 and PARVA in the IPP complex; PARVA and PARVB compete for the same binding site. Interaction with PARVG promotes the establishment of cell polarity required for leukocyte migration. Interacts with the cytoplasmic domain of integrin ITGB1 and may also interact with integrins ITGB2, ITGB3 and/or ITGB5. Interacts probably also with TGFB1I1. Interacts (via ANK repeats) with EPHA1 (via SAM domain); stimulated by EFNA1 but independent of the kinase activity of EPHA1. Interacts with FERMT2. Interacts with LIMD2; leading to activate the protein kinase activity. Interacts with PXN/PAXILLIN (via LD motif 4). Interacts with CCDC25 (via cytoplasmic region); initiating the ILK-PARVB cascade to induce cytoskeleton rearrangement and directional migration of cells. Interacts with IQGAP1; the interaction is required for localization of IQGAP1 to the cell cortex. Post-translationally, phosphorylation by PAK1 modulates ILK subcellular location by promoting its nuclear export.

It is found in the cell junction. The protein localises to the focal adhesion. It localises to the cell membrane. Its subcellular location is the cell projection. The protein resides in the lamellipodium. It is found in the cytoplasm. The protein localises to the myofibril. It localises to the sarcomere. Its subcellular location is the nucleus. The protein resides in the cytoskeleton. It is found in the microtubule organizing center. The protein localises to the centrosome. It localises to the cell cortex. In terms of biological role, scaffold protein which mediates protein-protein interactions during a range of cellular events including focal adhesion assembly, cell adhesion and cell migration. Regulates integrin-mediated signal transduction by contributing to inside-out integrin activation. Recruits PARVA and LIMS1/PITCH to form the heterotrimeric IPP (ILK-PINCH-PARVIN) complex which binds to F-actin via the C-terminal tail of LIMS1 and the N-terminal region of PARVA, promoting F-actin filament bundling, a process required to generate force for actin cytoskeleton reorganization and subsequent dynamic cell adhesion events such as cell spreading and migration. Binding to PARVA promotes effective assembly of ILK into focal adhesions while PARVA-bound ILK can simultaneously engage integrin-beta cytoplasmic tails to mediate cell adhesion. Plays a role with PARVG in promoting the cell adhesion and spreading of leukocytes. Acts as an upstream effector of both AKT1/PKB and GSK3. Mediates trafficking of caveolae to the cell surface in an ITGB1-dependent manner by promoting the recruitment of IQGAP1 to the cell cortex which cooperates with its effector DIAPH1 to locally stabilize microtubules and allow stable insertion of caveolae into the plasma membrane. Required for the maintenance of mitotic spindle integrity by promoting phosphorylation of TACC3 by AURKA. Associates with chromatin and may act as a negative regulator of transcription when located in the nucleus. This Cavia porcellus (Guinea pig) protein is Scaffold protein ILK.